The sequence spans 214 residues: MRIILLGAPGAGKGTQANFIMDKYGIPQISTGDMLRAAIKAGTELGKQAKAVIDAGQLVSDEIILGLIKERIAQDDCEKGFLLDGFPRTIPQADGLKEMGVDVDYVIEFDVADDVIVERMAGRRAHLPSGRTYHVVYNPPKVEGKDDVTGEDLVVRDDDKEETVRARLGVYHEQTAPLINYYGKEAEAGNTKYLKFDGTKQVAEVSADIEKALA.

10–15 (GAGKGT) is an ATP binding site. The segment at 30-59 (STGDMLRAAIKAGTELGKQAKAVIDAGQLV) is NMP. Residues threonine 31, arginine 36, 57-59 (QLV), 85-88 (GFPR), and glutamine 92 each bind AMP. The tract at residues 122-159 (GRRAHLPSGRTYHVVYNPPKVEGKDDVTGEDLVVRDDD) is LID. Residues arginine 123 and 132-133 (TY) contribute to the ATP site. Arginine 156 and arginine 167 together coordinate AMP. Lysine 200 provides a ligand contact to ATP.

The protein belongs to the adenylate kinase family. In terms of assembly, monomer.

The protein localises to the cytoplasm. The catalysed reaction is AMP + ATP = 2 ADP. Its pathway is purine metabolism; AMP biosynthesis via salvage pathway; AMP from ADP: step 1/1. Catalyzes the reversible transfer of the terminal phosphate group between ATP and AMP. Plays an important role in cellular energy homeostasis and in adenine nucleotide metabolism. The sequence is that of Adenylate kinase from Vibrio campbellii (strain ATCC BAA-1116).